The sequence spans 741 residues: Transketolase, chloroplastic (741 aa).

Residues 1–19 (MAASSSLSTLSHHQTLLSH) show a composition bias toward low complexity. Residues 1–33 (MAASSSLSTLSHHQTLLSHPKTHLPTTPASSLL) are disordered. The N-terminal 66 residues, 1-66 (MAASSSLSTL…VGSASAVVRA (66 aa)), are a transit peptide targeting the chloroplast. Positions 24 to 33 (LPTTPASSLL) are enriched in polar residues. H103 is a binding site for substrate. Residues H143 and 192–194 (GPL) contribute to the thiamine diphosphate site. Residue D233 coordinates Mg(2+). The thiamine diphosphate site is built by G234 and N263. N263 and I265 together coordinate Mg(2+). H340, R434, and S461 together coordinate substrate. H340 provides a ligand contact to thiamine diphosphate. The thiamine diphosphate site is built by E488 and F515. E488 (proton donor) is an active-site residue. Substrate contacts are provided by H539, D547, and R598.

This sequence belongs to the transketolase family. Homodimer. It depends on Mg(2+) as a cofactor. Ca(2+) serves as cofactor. The cofactor is Mn(2+). Co(2+) is required as a cofactor. Requires thiamine diphosphate as cofactor.

The protein resides in the plastid. It localises to the chloroplast thylakoid membrane. It carries out the reaction D-sedoheptulose 7-phosphate + D-glyceraldehyde 3-phosphate = aldehydo-D-ribose 5-phosphate + D-xylulose 5-phosphate. It functions in the pathway carbohydrate biosynthesis; Calvin cycle. Functionally, catalyzes the reversible transfer of a two-carbon ketol group from fructose-6-phosphate or sedoheptulose-7-phosphate to glyceraldehyde-3-phosphate to yield xylulose-5-phosphate and erythrose-4-phosphate or ribose-5-phosphate, respectively. This chain is Transketolase, chloroplastic, found in Spinacia oleracea (Spinach).